We begin with the raw amino-acid sequence, 272 residues long: ATP synthase subunit a (272 aa).

A run of 6 helical transmembrane segments spans residues 42-62 (IDSL…AGFV), 108-128 (FVWI…LPCI), 140-162 (ILPS…LMIF), 177-197 (LIYH…LEII), 219-239 (LIFI…LSVP), and 241-261 (AIFH…LTII).

Belongs to the ATPase A chain family. F-type ATPases have 2 components, CF(1) - the catalytic core - and CF(0) - the membrane proton channel. CF(1) has five subunits: alpha(3), beta(3), gamma(1), delta(1), epsilon(1). CF(0) has three main subunits: a(1), b(2) and c(9-12). The alpha and beta chains form an alternating ring which encloses part of the gamma chain. CF(1) is attached to CF(0) by a central stalk formed by the gamma and epsilon chains, while a peripheral stalk is formed by the delta and b chains.

It localises to the cell inner membrane. Functionally, key component of the proton channel; it plays a direct role in the translocation of protons across the membrane. This Blochmanniella floridana protein is ATP synthase subunit a.